We begin with the raw amino-acid sequence, 212 residues long: MNLFRFLGDLSHLLAIILLLLKIWKSRSCAGISGKSQVLFAVVFTARYLDLFTNYISLYNTCMKVVYIACSFTTVWLIYSKFKATYDGNHDTFRVEFLVVPTAILAFLVNHDFTPLEILWTFSIYLESVAILPQLFMVSKTGEAETITSHYLFALGVYRTLYLFNWIWRYHFEGFFDLIAIVAGLVQTVLYCDFFYLYITKVLKGKKLSLPA.

The Lumenal portion of the chain corresponds to 1–4 (MNLF). Residues 5–24 (RFLGDLSHLLAIILLLLKIW) traverse the membrane as a helical segment. The Cytoplasmic portion of the chain corresponds to 25 to 32 (KSRSCAGI). The chain crosses the membrane as a helical span at residues 33–52 (SGKSQVLFAVVFTARYLDLF). Positions 47–48 (RY) are interaction with the K-D-E-L motif on target proteins. The Lumenal portion of the chain corresponds to 53–58 (TNYISL). A helical membrane pass occupies residues 59–79 (YNTCMKVVYIACSFTTVWLIY). Topologically, residues 80–92 (SKFKATYDGNHDT) are cytoplasmic. The chain crosses the membrane as a helical span at residues 93-110 (FRVEFLVVPTAILAFLVN). Over 111–116 (HDFTPL) the chain is Lumenal. The helical transmembrane segment at 117 to 135 (EILWTFSIYLESVAILPQL) threads the bilayer. Residues 136-149 (FMVSKTGEAETITS) lie on the Cytoplasmic side of the membrane. Residues 150-168 (HYLFALGVYRTLYLFNWIW) traverse the membrane as a helical segment. The interaction with the K-D-E-L motif on target proteins stretch occupies residues 159–169 (RTLYLFNWIWR). Topologically, residues 169-178 (RYHFEGFFDL) are lumenal. Residues 179–199 (IAIVAGLVQTVLYCDFFYLYI) form a helical membrane-spanning segment. At 200–212 (TKVLKGKKLSLPA) the chain is on the cytoplasmic side. Residues 204–207 (KGKK) are important for recycling of cargo proteins with the sequence motif K-D-E-L from the Golgi to the endoplasmic reticulum. At serine 209 the chain carries Phosphoserine; by PKA.

This sequence belongs to the ERD2 family. As to quaternary structure, upon ligand binding the receptor oligomerizes and interacts with components of the transport machinery such as ARFGAP1 and ARF1. Post-translationally, phosphorylation by PKA at Ser-209 is required for endoplasmic reticulum retention function.

Its subcellular location is the golgi apparatus membrane. It localises to the cytoplasmic vesicle. The protein localises to the COPI-coated vesicle membrane. It is found in the endoplasmic reticulum membrane. The protein resides in the endoplasmic reticulum-Golgi intermediate compartment membrane. In terms of biological role, receptor for the C-terminal sequence motif K-D-E-L that is present on endoplasmic reticulum resident proteins and that mediates their recycling from the Golgi back to the endoplasmic reticulum. In Homo sapiens (Human), this protein is ER lumen protein-retaining receptor 1 (KDELR1).